The primary structure comprises 235 residues: Aspartate/glutamate leucyltransferase (235 aa).

This sequence belongs to the R-transferase family. Bpt subfamily.

It is found in the cytoplasm. It catalyses the reaction N-terminal L-glutamyl-[protein] + L-leucyl-tRNA(Leu) = N-terminal L-leucyl-L-glutamyl-[protein] + tRNA(Leu) + H(+). It carries out the reaction N-terminal L-aspartyl-[protein] + L-leucyl-tRNA(Leu) = N-terminal L-leucyl-L-aspartyl-[protein] + tRNA(Leu) + H(+). In terms of biological role, functions in the N-end rule pathway of protein degradation where it conjugates Leu from its aminoacyl-tRNA to the N-termini of proteins containing an N-terminal aspartate or glutamate. In Shewanella putrefaciens (strain CN-32 / ATCC BAA-453), this protein is Aspartate/glutamate leucyltransferase.